Here is a 179-residue protein sequence, read N- to C-terminus: Plasmid-derived single-stranded DNA-binding protein (179 aa).

An SSB domain is found at 6–110 (INKVILVGRL…ILVKTTGTMQ (105 aa)). Residues 55–61 (WHRVVLF) mediate DNA binding. The segment at 117-179 (GAQTQPEEGQ…DYGFSDDIPF (63 aa)) is disordered. Polar residues predominate over residues 118–132 (AQTQPEEGQQFSGQP). The span at 145-155 (GGAKTKGRGRK) shows a compositional bias: basic residues. Over residues 167–179 (EGDDYGFSDDIPF) the composition is skewed to acidic residues.

In terms of assembly, homotetramer.

May contribute to the conjugative processing of DNA. It has a functional relationship with Psi (plasmid-mediated sos inhibition) proteins. In Escherichia coli (strain K12), this protein is Plasmid-derived single-stranded DNA-binding protein (ssbF).